The following is a 416-amino-acid chain: Enterobactin exporter EntS (416 aa).

Residues 1–21 (MNKQSWLLNLSLLKTHPAFRA) lie on the Cytoplasmic side of the membrane. The helical transmembrane segment at 22-42 (VFLARFISIVSLGLLGVAVPV) threads the bilayer. At 43–55 (QIQMMTHSTWQVG) the chain is on the periplasmic side. Residues 56-76 (LSVTLTGGAMFVGLMVGGVLA) traverse the membrane as a helical segment. The Cytoplasmic segment spans residues 77–83 (DRYERKK). The helical transmembrane segment at 84–104 (VILLARGTCGIGFIGLCLNAL) threads the bilayer. Residues 105 to 109 (LPEPS) lie on the Periplasmic side of the membrane. The chain crosses the membrane as a helical span at residues 110–130 (LLAIYLLGLWDGFFASLGVTA). Topologically, residues 131–156 (LLAATPALVGRENLMQAGAITMLTVR) are cytoplasmic. The chain crosses the membrane as a helical span at residues 157–177 (LGSVISPMIGGLLLATGGVAW). Asn178 is a topological domain (periplasmic). The helical transmembrane segment at 179–199 (YGLAAAGTFITLLPLLSLPAL) threads the bilayer. At 200 to 218 (PPPPQPREHPLKSLLAGFR) the chain is on the cytoplasmic side. A helical membrane pass occupies residues 219 to 239 (FLLASPLVGGIALLGGLLTMA). Over 240–256 (SAVRVLYPALADNWQMS) the chain is Periplasmic. A helical transmembrane segment spans residues 257-277 (AAQIGFLYAAIPLGAAIGALT). The Cytoplasmic segment spans residues 278 to 287 (SGKLAHSARP). The helical transmembrane segment at 288-307 (GLLMLLSTLGSFLAIGLFGL) threads the bilayer. Residues 308 to 313 (MPMWIL) are Periplasmic-facing. A helical membrane pass occupies residues 314–336 (GVVCLALFGWLSAVSSLLQYTML). At 337–356 (QTQTPEAMLGRINGLWTAQN) the chain is on the cytoplasmic side. The helical transmembrane segment at 357-377 (VTGDAIGAALLGGLGAMMTPV) threads the bilayer. A topological domain (periplasmic) is located at residue Ala378. The helical transmembrane segment at 379–399 (SASASGFGLLIIGVLLLLVLV) threads the bilayer. Topologically, residues 400-416 (ELRRFRQTPPQMTASDS) are cytoplasmic.

This sequence belongs to the major facilitator superfamily. EntS (TC 2.A.1.38) family.

It localises to the cell inner membrane. In terms of biological role, component of an export pathway for enterobactin. The chain is Enterobactin exporter EntS from Escherichia coli O7:K1 (strain IAI39 / ExPEC).